A 567-amino-acid polypeptide reads, in one-letter code: Oxygen-dependent choline dehydrogenase (567 aa).

Residue 4–33 (DYIIIGAGSAGNVLAARLTEDADVTVLLLE) coordinates FAD. H473 (proton acceptor) is an active-site residue.

This sequence belongs to the GMC oxidoreductase family. It depends on FAD as a cofactor.

It catalyses the reaction choline + A = betaine aldehyde + AH2. The enzyme catalyses betaine aldehyde + NAD(+) + H2O = glycine betaine + NADH + 2 H(+). It participates in amine and polyamine biosynthesis; betaine biosynthesis via choline pathway; betaine aldehyde from choline (cytochrome c reductase route): step 1/1. Its function is as follows. Involved in the biosynthesis of the osmoprotectant glycine betaine. Catalyzes the oxidation of choline to betaine aldehyde and betaine aldehyde to glycine betaine at the same rate. In Yersinia pseudotuberculosis serotype IB (strain PB1/+), this protein is Oxygen-dependent choline dehydrogenase.